The primary structure comprises 501 residues: Histone deacetylase 19 (501 aa).

Residues 17 to 329 are histone deacetylase; sequence RKVCYFYDPE…WCYETGVALG (313 aa). The active-site Proton donor/acceptor is histidine 149. Zn(2+)-binding residues include aspartate 184, histidine 186, and aspartate 272. The segment at 383–501 is disordered; that stretch reads HAPSVPFQER…GAEQAFPPKT (119 aa). Residues 397 to 407 show a composition bias toward acidic residues; sequence ETPEVDEDQED. Serine 416 carries the post-translational modification Phosphoserine. 2 stretches are compositionally biased toward basic and acidic residues: residues 422–457 and 479–488; these read DDRK…KGCE and ASVKMEEEGT.

The protein belongs to the histone deacetylase family. HD type 1 subfamily. Interacts with SIN3, SAP18 and TPR1. Interacts with CDKE-1, MED14 and LUG. Interacts with TPL. Interacts with AHL22. The cofactor is Zn(2+). In terms of tissue distribution, highly expressed in leaves, stems, flowers and young siliques.

Its subcellular location is the nucleus. It catalyses the reaction N(6)-acetyl-L-lysyl-[histone] + H2O = L-lysyl-[histone] + acetate. In terms of biological role, responsible for the deacetylation of lysine residues on the N-terminal part of the core histones (H2A, H2B, H3 and H4). Histone deacetylation gives a tag for epigenetic repression and plays an important role in transcriptional regulation, cell cycle progression and developmental events. Histone deacetylases act via the formation of large multiprotein complexes. HDA19 is involved in jasmonic acid and ethylene signaling of pathogen response. Part of a repressor complex including APETALA2 (AP2) and TOPLESS (TPL) that control the expression domains of numerous floral organ identity genes. Involved in negative regulation of salinity stress response. Represses the expression of stress tolerance-related genes, genes coding for late embryogenesis abundant (LEA) proteins that prevent protein aggregation, and positive regulators of abscisic acid (ABA) signaling, such as ABI5 and NAC019. The sequence is that of Histone deacetylase 19 from Arabidopsis thaliana (Mouse-ear cress).